The sequence spans 272 residues: MTRIESTFETLKAQNKKALIPYVMAGDPNPSNFVGLLHDLVKHGADMIEVGLPFSDPMADGPTVALAGERALAAGTSTRDALKMVKEFRQQDTQTPIILMGYLNPVEIIGYDNFVSLCEQSGVDGILMVDLPPAEAGSFTQHLTEHAMNEIFLLSPTTLAERRQQVLTHCGGYIYYVSLKGVTGSATLDTDDVAKQVQAIKAETDLPVCVGFGIRDATSAKAIGAHADGIIVGSALVQNFADIDANDITAVANAQQKIMAKMDELRGALDSL.

Catalysis depends on proton acceptor residues Glu-49 and Asp-60.

The protein belongs to the TrpA family. In terms of assembly, tetramer of two alpha and two beta chains.

It carries out the reaction (1S,2R)-1-C-(indol-3-yl)glycerol 3-phosphate + L-serine = D-glyceraldehyde 3-phosphate + L-tryptophan + H2O. It functions in the pathway amino-acid biosynthesis; L-tryptophan biosynthesis; L-tryptophan from chorismate: step 5/5. In terms of biological role, the alpha subunit is responsible for the aldol cleavage of indoleglycerol phosphate to indole and glyceraldehyde 3-phosphate. The protein is Tryptophan synthase alpha chain of Psychrobacter cryohalolentis (strain ATCC BAA-1226 / DSM 17306 / VKM B-2378 / K5).